The following is a 247-amino-acid chain: MNKALLPLLLCCFIFPASGKDAGWQWYNEKINPKEKENKPVPAAPRQEPDIMQKLAALQTATKRALYEAILYPGVDNFVKYFRLQNYWAQQAGLFTMSARKAMLAHPELDYNLQYSHYNGTVRNQLAADQAQQRQAIAKLAEHYGIMFFYRGQDPIDGQLAQVINGFRDTYGLSVIPVSVDGVINPLLPDSRTDQGQAQRLGVKYFPAMMLVDPKQGSVRPLSYGFISQDDLAKQFLNVSEDFKPNF.

The N-terminal stretch at 1 to 19 (MNKALLPLLLCCFIFPASG) is a signal peptide.

It is found in the periplasm. Involved in F pilus assembly. This Escherichia coli (strain K12) protein is Protein TraF (traF).